The sequence spans 106 residues: Small ribosomal subunit protein uS10 (106 aa).

The protein belongs to the universal ribosomal protein uS10 family. As to quaternary structure, part of the 30S ribosomal subunit.

Involved in the binding of tRNA to the ribosomes. The protein is Small ribosomal subunit protein uS10 of Prochlorococcus marinus (strain MIT 9312).